The primary structure comprises 232 residues: 7-cyano-7-deazaguanine synthase (232 aa).

8–18 (FSGGQDSTTCL) is a binding site for ATP. Zn(2+) is bound by residues Cys-189, Cys-198, Cys-201, and Cys-204.

The protein belongs to the QueC family. Zn(2+) is required as a cofactor.

The enzyme catalyses 7-carboxy-7-deazaguanine + NH4(+) + ATP = 7-cyano-7-deazaguanine + ADP + phosphate + H2O + H(+). The protein operates within purine metabolism; 7-cyano-7-deazaguanine biosynthesis. Functionally, catalyzes the ATP-dependent conversion of 7-carboxy-7-deazaguanine (CDG) to 7-cyano-7-deazaguanine (preQ(0)). The polypeptide is 7-cyano-7-deazaguanine synthase (Yersinia enterocolitica serotype O:8 / biotype 1B (strain NCTC 13174 / 8081)).